Consider the following 238-residue polypeptide: Sugar fermentation stimulation protein homolog (238 aa).

This sequence belongs to the SfsA family.

The chain is Sugar fermentation stimulation protein homolog from Shewanella denitrificans (strain OS217 / ATCC BAA-1090 / DSM 15013).